The following is a 93-amino-acid chain: Putative defensin-like protein 283 (93 aa).

An N-terminal signal peptide occupies residues 1-24 (MTKIGFYLATYATIYIILSPGLLA). Disulfide bonds link C43–C83, C66–C90, and C72–C92.

This sequence belongs to the DEFL family.

The protein localises to the secreted. The polypeptide is Putative defensin-like protein 283 (Arabidopsis thaliana (Mouse-ear cress)).